The following is a 173-amino-acid chain: Small ribosomal subunit protein uS5 (173 aa).

Residues W17–V80 enclose the S5 DRBM domain.

Belongs to the universal ribosomal protein uS5 family. Part of the 30S ribosomal subunit. Contacts proteins S4 and S8.

Functionally, with S4 and S12 plays an important role in translational accuracy. Its function is as follows. Located at the back of the 30S subunit body where it stabilizes the conformation of the head with respect to the body. The sequence is that of Small ribosomal subunit protein uS5 from Microcystis aeruginosa (strain NIES-843 / IAM M-2473).